Reading from the N-terminus, the 646-residue chain is Serine/threonine-protein kinase PLK3 (646 aa).

The tract at residues 1 to 35 (MEPAAGFLSPRPFQRAAAAPAPPAGPGPPPSALRG) is disordered. Residues 10–19 (PRPFQRAAAA) are compositionally biased toward low complexity. Positions 20–31 (PAPPAGPGPPPS) are enriched in pro residues. The 253-residue stretch at 62–314 (YLKGRLLGKG…IDQILRHDFF (253 aa)) folds into the Protein kinase domain. Residues 68–76 (LGKGGFARC) and Lys-91 each bind ATP. The active-site Proton acceptor is Asp-185. A disordered region spans residues 381 to 417 (GHQDARPEAPAASGPAPVSLVETAPEDSSPRGTLASS). POLO box domains are found at residues 463–541 (WVSK…YMEQ) and 562–645 (LLLQ…DRSP).

This sequence belongs to the protein kinase superfamily. Ser/Thr protein kinase family. CDC5/Polo subfamily. As to quaternary structure, interacts (via the POLO-box domain) with CIB1; leading to inhibit PLK3 kinase activity. Interacts with GOLGB1. In terms of processing, phosphorylated in an ATM-dependent manner following DNA damage. Phosphorylated as cells enter mitosis and dephosphorylated as cells exit mitosis. In terms of tissue distribution, transcripts are highly detected in placenta, lung, followed by skeletal muscle, heart, pancreas, ovaries and kidney and weakly detected in liver and brain. May have a short half-live. In cells of hematopoietic origin, strongly and exclusively detected in terminally differentiated macrophages. Transcript expression appears to be down-regulated in primary lung tumor.

It is found in the cytoplasm. The protein localises to the nucleus. The protein resides in the nucleolus. Its subcellular location is the golgi apparatus. It localises to the cytoskeleton. It is found in the microtubule organizing center. The protein localises to the centrosome. It catalyses the reaction L-seryl-[protein] + ATP = O-phospho-L-seryl-[protein] + ADP + H(+). The catalysed reaction is L-threonyl-[protein] + ATP = O-phospho-L-threonyl-[protein] + ADP + H(+). Functionally, serine/threonine-protein kinase involved in cell cycle regulation, response to stress and Golgi disassembly. Polo-like kinases act by binding and phosphorylating proteins that are already phosphorylated on a specific motif recognized by the POLO box domains. Phosphorylates ATF2, BCL2L1, CDC25A, CDC25C, CHEK2, HIF1A, JUN, p53/TP53, p73/TP73, PTEN, TOP2A and VRK1. Involved in cell cycle regulation: required for entry into S phase and cytokinesis. Phosphorylates BCL2L1, leading to regulate the G2 checkpoint and progression to cytokinesis during mitosis. Plays a key role in response to stress: rapidly activated upon stress stimulation, such as ionizing radiation, reactive oxygen species (ROS), hyperosmotic stress, UV irradiation and hypoxia. Involved in DNA damage response and G1/S transition checkpoint by phosphorylating CDC25A, p53/TP53 and p73/TP73. Phosphorylates p53/TP53 in response to reactive oxygen species (ROS), thereby promoting p53/TP53-mediated apoptosis. Phosphorylates CHEK2 in response to DNA damage, promoting the G2/M transition checkpoint. Phosphorylates the transcription factor p73/TP73 in response to DNA damage, leading to inhibit p73/TP73-mediated transcriptional activation and pro-apoptotic functions. Phosphorylates HIF1A and JUN is response to hypoxia. Phosphorylates ATF2 following hyperosmotic stress in corneal epithelium. Also involved in Golgi disassembly during the cell cycle: part of a MEK1/MAP2K1-dependent pathway that induces Golgi fragmentation during mitosis by mediating phosphorylation of VRK1. May participate in endomitotic cell cycle, a form of mitosis in which both karyokinesis and cytokinesis are interrupted and is a hallmark of megakaryocyte differentiation, via its interaction with CIB1. The polypeptide is Serine/threonine-protein kinase PLK3 (PLK3) (Homo sapiens (Human)).